The primary structure comprises 103 residues: Endoribonuclease MazF3 (103 aa).

Belongs to the PemK/MazF family. In terms of assembly, forms a complex with cognate antitoxin MazE3.

Its function is as follows. Toxic component of a type II toxin-antitoxin (TA) system. Acts as an endoribonuclease, cleaving in U-rich regions. Neutralized by cognate antitoxin MazE3. The sequence is that of Endoribonuclease MazF3 (mazF3) from Mycobacterium tuberculosis (strain CDC 1551 / Oshkosh).